The chain runs to 143 residues: D-aminoacyl-tRNA deacylase (143 aa).

Positions 135–136 match the Gly-cisPro motif, important for rejection of L-amino acids motif; sequence GP.

The protein belongs to the DTD family. As to quaternary structure, homodimer.

The protein resides in the cytoplasm. The enzyme catalyses glycyl-tRNA(Ala) + H2O = tRNA(Ala) + glycine + H(+). It catalyses the reaction a D-aminoacyl-tRNA + H2O = a tRNA + a D-alpha-amino acid + H(+). Its function is as follows. An aminoacyl-tRNA editing enzyme that deacylates mischarged D-aminoacyl-tRNAs. Also deacylates mischarged glycyl-tRNA(Ala), protecting cells against glycine mischarging by AlaRS. Acts via tRNA-based rather than protein-based catalysis; rejects L-amino acids rather than detecting D-amino acids in the active site. By recycling D-aminoacyl-tRNA to D-amino acids and free tRNA molecules, this enzyme counteracts the toxicity associated with the formation of D-aminoacyl-tRNA entities in vivo and helps enforce protein L-homochirality. This Mycobacterium avium (strain 104) protein is D-aminoacyl-tRNA deacylase.